A 199-amino-acid chain; its full sequence is Large ribosomal subunit protein bL9 (199 aa).

Over residues 149–166 (AEAERINRGEDINSRQED) the composition is skewed to basic and acidic residues. The segment at 149–199 (AEAERINRGEDINSRQEDQDAAAEAIAAAGEFFDPEAQDETPETEAASEQQ) is disordered. Acidic residues predominate over residues 181–191 (FDPEAQDETPE).

It belongs to the bacterial ribosomal protein bL9 family.

In terms of biological role, binds to the 23S rRNA. This is Large ribosomal subunit protein bL9 from Afipia carboxidovorans (strain ATCC 49405 / DSM 1227 / KCTC 32145 / OM5) (Oligotropha carboxidovorans).